Here is a 154-residue protein sequence, read N- to C-terminus: Ribonuclease H (154 aa).

Residues 1–142 enclose the RNase H type-1 domain; sequence MTKHVEIFTD…CDELARTAAE (142 aa). Positions 10, 48, 70, and 134 each coordinate Mg(2+).

This sequence belongs to the RNase H family. In terms of assembly, monomer. Requires Mg(2+) as cofactor.

It is found in the cytoplasm. The catalysed reaction is Endonucleolytic cleavage to 5'-phosphomonoester.. Its function is as follows. Endonuclease that specifically degrades the RNA of RNA-DNA hybrids. This is Ribonuclease H from Vibrio campbellii (strain ATCC BAA-1116).